The sequence spans 541 residues: Chaperonin GroEL (541 aa).

ATP is bound by residues 29–32 (TLGP), 86–90 (DGTTT), G413, 476–478 (NAA), and D492. Positions 521–541 (KPEENAPAAPAAPNPGMGGMM) are disordered. Residues 525–535 (NAPAAPAAPNP) are compositionally biased toward low complexity.

Belongs to the chaperonin (HSP60) family. As to quaternary structure, forms a cylinder of 14 subunits composed of two heptameric rings stacked back-to-back. Interacts with the co-chaperonin GroES.

The protein localises to the cytoplasm. The enzyme catalyses ATP + H2O + a folded polypeptide = ADP + phosphate + an unfolded polypeptide.. Together with its co-chaperonin GroES, plays an essential role in assisting protein folding. The GroEL-GroES system forms a nano-cage that allows encapsulation of the non-native substrate proteins and provides a physical environment optimized to promote and accelerate protein folding. The polypeptide is Chaperonin GroEL (Lactiplantibacillus plantarum (strain ATCC BAA-793 / NCIMB 8826 / WCFS1) (Lactobacillus plantarum)).